A 144-amino-acid chain; its full sequence is Neuritin-B (144 aa).

Positions 1-27 (MGLKLSGRYIFLVLAVHLAYLLQAVKA) are cleaved as a signal peptide. The GPI-anchor amidated serine moiety is linked to residue S114. A propeptide spans 115 to 144 (TGAPGPRLLFPAFLPLLIVFLSALLNWVLQ) (removed in mature form).

It belongs to the neuritin family.

The protein resides in the cell membrane. Its function is as follows. Modulates postsynaptic dendritic arbor elaboration and synaptic maturation. The sequence is that of Neuritin-B (nrn1-b) from Xenopus laevis (African clawed frog).